Reading from the N-terminus, the 196-residue chain is Probable malonic semialdehyde reductase RutE (196 aa).

The protein belongs to the nitroreductase family. HadB/RutE subfamily. FMN serves as cofactor.

The enzyme catalyses 3-hydroxypropanoate + NADP(+) = 3-oxopropanoate + NADPH + H(+). In terms of biological role, may reduce toxic product malonic semialdehyde to 3-hydroxypropionic acid, which is excreted. The sequence is that of Probable malonic semialdehyde reductase RutE from Escherichia coli (strain SMS-3-5 / SECEC).